We begin with the raw amino-acid sequence, 389 residues long: Phospho-N-acetylmuramoyl-pentapeptide-transferase (389 aa).

11 helical membrane passes run 25-45, 74-94, 97-117, 134-154, 167-187, 190-210, 222-242, 259-279, 286-306, 311-331, and 366-386; these read RAVMANVTALVIGLGFGPWVI, MGGVLVLISIAISTLLWCDWG, FIWVVLLVTLGYGAIGWVDDY, FFWQTLIGLVAAVYLAFSVSE, WIEGGMFADVPYKMNLIVPFF, VSYPLGVTGFIVLTYLVIVGS, GLVIMPVVLVGGGLGVFAYVM, AGELLIFCSAMAGAGLAFLWF, VFMGDVGALALGGALGTVAVI, IVLFVMGGIFVVETLSVMLQV, and QVTVRFWIITMLLVLIGLSSL.

The protein belongs to the glycosyltransferase 4 family. MraY subfamily. It depends on Mg(2+) as a cofactor.

Its subcellular location is the cell inner membrane. The enzyme catalyses UDP-N-acetyl-alpha-D-muramoyl-L-alanyl-gamma-D-glutamyl-meso-2,6-diaminopimeloyl-D-alanyl-D-alanine + di-trans,octa-cis-undecaprenyl phosphate = di-trans,octa-cis-undecaprenyl diphospho-N-acetyl-alpha-D-muramoyl-L-alanyl-D-glutamyl-meso-2,6-diaminopimeloyl-D-alanyl-D-alanine + UMP. It participates in cell wall biogenesis; peptidoglycan biosynthesis. Its function is as follows. Catalyzes the initial step of the lipid cycle reactions in the biosynthesis of the cell wall peptidoglycan: transfers peptidoglycan precursor phospho-MurNAc-pentapeptide from UDP-MurNAc-pentapeptide onto the lipid carrier undecaprenyl phosphate, yielding undecaprenyl-pyrophosphoryl-MurNAc-pentapeptide, known as lipid I. The polypeptide is Phospho-N-acetylmuramoyl-pentapeptide-transferase (Cupriavidus metallidurans (strain ATCC 43123 / DSM 2839 / NBRC 102507 / CH34) (Ralstonia metallidurans)).